A 98-amino-acid chain; its full sequence is ACCARLCCSVPTSPATTICSSDKFCRCGVCLPSTCPHTVWLLQPTCCCDNRPPPYHVPQPSVPTCFLLNSSQPTPGLESINLTTYTQSSCEPCIPSCC.

Position 1 is an N-acetylalanine (A1).

It belongs to the KRTAP type 3 family. Interacts with wool keratins. Wool.

In the wool cortex, wool keratin intermediate filaments are embedded in an interfilamentous matrix, consisting of hair keratin-associated proteins (KRTAP), which are essential for the formation of a rigid and resistant wool shaft through their extensive disulfide bond cross-linking with abundant cysteine residues of wool keratins. The matrix proteins include the high-sulfur and high-glycine-tyrosine keratins. This Ovis aries (Sheep) protein is Keratin, high sulfur matrix protein, IIIB3.